The following is a 530-amino-acid chain: Glucose-6-phosphate isomerase (530 aa).

Catalysis depends on glutamate 322, which acts as the Proton donor. Residues histidine 351 and lysine 455 contribute to the active site.

This sequence belongs to the GPI family.

The protein resides in the cytoplasm. It catalyses the reaction alpha-D-glucose 6-phosphate = beta-D-fructose 6-phosphate. The protein operates within carbohydrate biosynthesis; gluconeogenesis. Its pathway is carbohydrate degradation; glycolysis; D-glyceraldehyde 3-phosphate and glycerone phosphate from D-glucose: step 2/4. Functionally, catalyzes the reversible isomerization of glucose-6-phosphate to fructose-6-phosphate. This Citrifermentans bemidjiense (strain ATCC BAA-1014 / DSM 16622 / JCM 12645 / Bem) (Geobacter bemidjiensis) protein is Glucose-6-phosphate isomerase.